The sequence spans 37 residues: Photosystem I reaction center subunit IX (37 aa).

A helical membrane pass occupies residues 4–24 (FLSSAPVLLTAMMVFTAGLLI).

It belongs to the PsaJ family.

Its subcellular location is the cellular thylakoid membrane. May help in the organization of the PsaE and PsaF subunits. This Picosynechococcus sp. (strain ATCC 27264 / PCC 7002 / PR-6) (Agmenellum quadruplicatum) protein is Photosystem I reaction center subunit IX.